A 347-amino-acid chain; its full sequence is Lipoyl synthase (347 aa).

Residues Cys77, Cys82, Cys88, Cys103, Cys107, Cys110, and Ser317 each contribute to the [4Fe-4S] cluster site. In terms of domain architecture, Radical SAM core spans 89–306 (FADGTATFMI…MDYGKKIGFF (218 aa)).

The protein belongs to the radical SAM superfamily. Lipoyl synthase family. It depends on [4Fe-4S] cluster as a cofactor.

It is found in the cytoplasm. The catalysed reaction is [[Fe-S] cluster scaffold protein carrying a second [4Fe-4S](2+) cluster] + N(6)-octanoyl-L-lysyl-[protein] + 2 oxidized [2Fe-2S]-[ferredoxin] + 2 S-adenosyl-L-methionine + 4 H(+) = [[Fe-S] cluster scaffold protein] + N(6)-[(R)-dihydrolipoyl]-L-lysyl-[protein] + 4 Fe(3+) + 2 hydrogen sulfide + 2 5'-deoxyadenosine + 2 L-methionine + 2 reduced [2Fe-2S]-[ferredoxin]. It functions in the pathway protein modification; protein lipoylation via endogenous pathway; protein N(6)-(lipoyl)lysine from octanoyl-[acyl-carrier-protein]: step 2/2. Catalyzes the radical-mediated insertion of two sulfur atoms into the C-6 and C-8 positions of the octanoyl moiety bound to the lipoyl domains of lipoate-dependent enzymes, thereby converting the octanoylated domains into lipoylated derivatives. This Psychrobacter arcticus (strain DSM 17307 / VKM B-2377 / 273-4) protein is Lipoyl synthase.